The following is a 444-amino-acid chain: Tol-Pal system protein TolB (444 aa).

The N-terminal stretch at 1 to 19 is a signal peptide; it reads MRNIIYFILSLLFSVTSYA.

Belongs to the TolB family. In terms of assembly, the Tol-Pal system is composed of five core proteins: the inner membrane proteins TolA, TolQ and TolR, the periplasmic protein TolB and the outer membrane protein Pal. They form a network linking the inner and outer membranes and the peptidoglycan layer.

Its subcellular location is the periplasm. Part of the Tol-Pal system, which plays a role in outer membrane invagination during cell division and is important for maintaining outer membrane integrity. The chain is Tol-Pal system protein TolB from Rickettsia conorii (strain ATCC VR-613 / Malish 7).